The sequence spans 776 residues: Semaphorin-4F (776 aa).

A signal peptide spans 1–39 (MLARAERPRPGPRPPPVFPFPPPLSLLLLLAILSAPVCG). Topologically, residues 40–665 (RVPRSVPRTS…GPSNRAHTVV (626 aa)) are extracellular. The Sema domain occupies 47–515 (RTSLPISEAD…SHTEVTQVNT (469 aa)). Asn69 carries an N-linked (GlcNAc...) asparagine glycan. Cys117 and Cys127 are oxidised to a cystine. Asn138 carries N-linked (GlcNAc...) asparagine glycosylation. Disulfide bonds link Cys145–Cys154, Cys278–Cys389, and Cys302–Cys348. Asn514 is a glycosylation site (N-linked (GlcNAc...) asparagine). A PSI domain is found at 517 to 568 (NCGRLQSCSECILAQDPVCAWSFRLDACVAHAGEHRGMVQDIESADVSSLCP). 3 disulfides stabilise this stretch: Cys518/Cys535, Cys527/Cys544, and Cys592/Cys633. The 56-residue stretch at 585 to 640 (VGHVVLPCSPSSAWASCVWHQPSGVTALTPRRDGLEVVVTPGAMGAYACECQEGGA) folds into the Ig-like C2-type domain. The helical transmembrane segment at 666–686 (GAGLVGFLLGVLAASLTLLLI) threads the bilayer. Residues 687 to 776 (GRRQQRRRQR…PLATCDETSI (90 aa)) lie on the Cytoplasmic side of the membrane. The tract at residues 702 to 741 (DKVGLDLGAPPSGTTSYSQDPPSPSPEDERLPLALGKRGS) is disordered. Phosphoserine occurs at positions 724 and 726. The PDZ-binding signature appears at 774-776 (TSI).

The protein belongs to the semaphorin family. In terms of assembly, interacts (via PDZ-binding motif) with DLG4/SAP90 (via PDZ domain 2); this interaction may promote translocation of DLG4/SAP90 to the membrane. In terms of tissue distribution, expressed at low levels in the developing embryo. Expressed at high levels in the lung and adult central nervous system, including the dorsal root ganglia.

It is found in the cell membrane. It localises to the postsynaptic density. The protein localises to the perikaryon. Its subcellular location is the cell projection. The protein resides in the dendrite. Functionally, probable cell surface receptor that regulates oligodendroglial precursor cell migration. Might also regulate differentiation of oligodendroglial precursor cells. Has growth cone collapse activity against retinal ganglion-cell axons. The chain is Semaphorin-4F (Sema4f) from Rattus norvegicus (Rat).